Reading from the N-terminus, the 162-residue chain is Crossover junction endodeoxyribonuclease RuvC (162 aa).

Catalysis depends on residues Asp-8, Glu-69, and His-141. Asp-8, Glu-69, and His-141 together coordinate Mg(2+).

It belongs to the RuvC family. As to quaternary structure, homodimer which binds Holliday junction (HJ) DNA. The HJ becomes 2-fold symmetrical on binding to RuvC with unstacked arms; it has a different conformation from HJ DNA in complex with RuvA. In the full resolvosome a probable DNA-RuvA(4)-RuvB(12)-RuvC(2) complex forms which resolves the HJ. The cofactor is Mg(2+).

Its subcellular location is the cytoplasm. The catalysed reaction is Endonucleolytic cleavage at a junction such as a reciprocal single-stranded crossover between two homologous DNA duplexes (Holliday junction).. Its function is as follows. The RuvA-RuvB-RuvC complex processes Holliday junction (HJ) DNA during genetic recombination and DNA repair. Endonuclease that resolves HJ intermediates. Cleaves cruciform DNA by making single-stranded nicks across the HJ at symmetrical positions within the homologous arms, yielding a 5'-phosphate and a 3'-hydroxyl group; requires a central core of homology in the junction. The consensus cleavage sequence is 5'-(A/T)TT(C/G)-3'. Cleavage occurs on the 3'-side of the TT dinucleotide at the point of strand exchange. HJ branch migration catalyzed by RuvA-RuvB allows RuvC to scan DNA until it finds its consensus sequence, where it cleaves and resolves the cruciform DNA. The protein is Crossover junction endodeoxyribonuclease RuvC of Wolbachia pipientis wMel.